A 132-amino-acid chain; its full sequence is Large ribosomal subunit protein bL17 (132 aa).

This sequence belongs to the bacterial ribosomal protein bL17 family. In terms of assembly, part of the 50S ribosomal subunit. Contacts protein L32.

The chain is Large ribosomal subunit protein bL17 from Leptothrix cholodnii (strain ATCC 51168 / LMG 8142 / SP-6) (Leptothrix discophora (strain SP-6)).